The primary structure comprises 142 residues: Large ribosomal subunit protein uL11 (142 aa).

The protein belongs to the universal ribosomal protein uL11 family. Part of the ribosomal stalk of the 50S ribosomal subunit. Interacts with L10 and the large rRNA to form the base of the stalk. L10 forms an elongated spine to which L12 dimers bind in a sequential fashion forming a multimeric L10(L12)X complex. One or more lysine residues are methylated.

Its function is as follows. Forms part of the ribosomal stalk which helps the ribosome interact with GTP-bound translation factors. This is Large ribosomal subunit protein uL11 from Desulfitobacterium hafniense (strain DSM 10664 / DCB-2).